The primary structure comprises 130 residues: UPF0251 protein Swol_2090 (130 aa).

Belongs to the UPF0251 family.

The polypeptide is UPF0251 protein Swol_2090 (Syntrophomonas wolfei subsp. wolfei (strain DSM 2245B / Goettingen)).